Consider the following 362-residue polypeptide: 3-dehydroquinate synthase (362 aa).

Residues 71–76, 105–109, 129–130, Lys142, and Lys151 contribute to the NAD(+) site; these read DGEQNK, GVIGD, and TT. Glu184, His247, and His264 together coordinate Zn(2+).

It belongs to the sugar phosphate cyclases superfamily. Dehydroquinate synthase family. The cofactor is Co(2+). Zn(2+) is required as a cofactor. Requires NAD(+) as cofactor.

It localises to the cytoplasm. It catalyses the reaction 7-phospho-2-dehydro-3-deoxy-D-arabino-heptonate = 3-dehydroquinate + phosphate. Its pathway is metabolic intermediate biosynthesis; chorismate biosynthesis; chorismate from D-erythrose 4-phosphate and phosphoenolpyruvate: step 2/7. In terms of biological role, catalyzes the conversion of 3-deoxy-D-arabino-heptulosonate 7-phosphate (DAHP) to dehydroquinate (DHQ). The sequence is that of 3-dehydroquinate synthase from Blochmanniella pennsylvanica (strain BPEN).